The primary structure comprises 465 residues: Chromosomal replication initiator protein DnaA (465 aa).

The segment at 1 to 80 (MLWTDCLTRL…VEILVDSRPG (80 aa)) is domain I, interacts with DnaA modulators. The interval 80–127 (GAILSPAEQPATTTAALSSTPVVPQRVKKEVVEPAATQSNKILNSKKR) is domain II. The interval 128–345 (LLNPLFTFSL…GALNKVVAIA (218 aa)) is domain III, AAA+ region. Residues glycine 173, glycine 175, lysine 176, and threonine 177 each contribute to the ATP site. The interval 346 to 465 (RFKGSQIDLD…YKNLLRLLQS (120 aa)) is domain IV, binds dsDNA.

The protein belongs to the DnaA family. Oligomerizes as a right-handed, spiral filament on DNA at oriC.

The protein localises to the cytoplasm. Plays an essential role in the initiation and regulation of chromosomal replication. ATP-DnaA binds to the origin of replication (oriC) to initiate formation of the DNA replication initiation complex once per cell cycle. Binds the DnaA box (a 9 base pair repeat at the origin) and separates the double-stranded (ds)DNA. Forms a right-handed helical filament on oriC DNA; dsDNA binds to the exterior of the filament while single-stranded (ss)DNA is stabiized in the filament's interior. The ATP-DnaA-oriC complex binds and stabilizes one strand of the AT-rich DNA unwinding element (DUE), permitting loading of DNA polymerase. After initiation quickly degrades to an ADP-DnaA complex that is not apt for DNA replication. Binds acidic phospholipids. The chain is Chromosomal replication initiator protein DnaA from Acinetobacter baylyi (strain ATCC 33305 / BD413 / ADP1).